The sequence spans 333 residues: Adenosine deaminase (333 aa).

His12 and His14 together coordinate Zn(2+). His14, Asp16, and Gly170 together coordinate substrate. His197 lines the Zn(2+) pocket. Residue Glu200 is the Proton donor of the active site. Asp278 is a Zn(2+) binding site. Asp279 serves as a coordination point for substrate.

This sequence belongs to the metallo-dependent hydrolases superfamily. Adenosine and AMP deaminases family. Adenosine deaminase subfamily. Requires Zn(2+) as cofactor.

The enzyme catalyses adenosine + H2O + H(+) = inosine + NH4(+). The catalysed reaction is 2'-deoxyadenosine + H2O + H(+) = 2'-deoxyinosine + NH4(+). Catalyzes the hydrolytic deamination of adenosine and 2-deoxyadenosine. The chain is Adenosine deaminase from Shigella boydii serotype 4 (strain Sb227).